We begin with the raw amino-acid sequence, 206 residues long: Ribosomal RNA small subunit methyltransferase G (206 aa).

S-adenosyl-L-methionine contacts are provided by residues Gly73, Leu78, 124–125 (VE), and Arg139.

The protein belongs to the methyltransferase superfamily. RNA methyltransferase RsmG family.

The protein resides in the cytoplasm. The enzyme catalyses guanosine(527) in 16S rRNA + S-adenosyl-L-methionine = N(7)-methylguanosine(527) in 16S rRNA + S-adenosyl-L-homocysteine. In terms of biological role, specifically methylates the N7 position of guanine in position 527 of 16S rRNA. The sequence is that of Ribosomal RNA small subunit methyltransferase G from Edwardsiella ictaluri (strain 93-146).